A 246-amino-acid chain; its full sequence is Small ribosomal subunit protein uS3 (246 aa).

A KH type-2 domain is found at 38-106 (IRQYLNARLA…DVQINIYEIR (69 aa)). A disordered region spans residues 218–246 (VAKNQSRRPNAQGGNNRGGDRNRRRKGNR).

This sequence belongs to the universal ribosomal protein uS3 family. Part of the 30S ribosomal subunit. Forms a tight complex with proteins S10 and S14.

Binds the lower part of the 30S subunit head. Binds mRNA in the 70S ribosome, positioning it for translation. The protein is Small ribosomal subunit protein uS3 of Porphyromonas gingivalis (strain ATCC 33277 / DSM 20709 / CIP 103683 / JCM 12257 / NCTC 11834 / 2561).